Consider the following 539-residue polypeptide: Phosphoenolpyruvate carboxykinase (ATP) (539 aa).

Substrate contacts are provided by R64, Y206, and K212. ATP contacts are provided by residues K212, H231, and 247–255; that span reads GLSGTGKTT. Positions 212 and 231 each coordinate Mn(2+). Mn(2+) is bound at residue D268. Residues E296, R332, 448–449, and T454 each bind ATP; that span reads RI. A substrate-binding site is contributed by R332.

The protein belongs to the phosphoenolpyruvate carboxykinase (ATP) family. In terms of assembly, monomer. Mn(2+) is required as a cofactor.

It localises to the cytoplasm. It carries out the reaction oxaloacetate + ATP = phosphoenolpyruvate + ADP + CO2. Its pathway is carbohydrate biosynthesis; gluconeogenesis. Involved in the gluconeogenesis. Catalyzes the conversion of oxaloacetate (OAA) to phosphoenolpyruvate (PEP) through direct phosphoryl transfer between the nucleoside triphosphate and OAA. The sequence is that of Phosphoenolpyruvate carboxykinase (ATP) from Citrobacter koseri (strain ATCC BAA-895 / CDC 4225-83 / SGSC4696).